The primary structure comprises 152 residues: Ribonuclease pancreatic (152 aa).

Positions 1–24 are cleaved as a signal peptide; the sequence is MALDKSVILLPLLVLVLLVLGCLG. Substrate contacts are provided by Lys31 and Arg34. The active-site Proton acceptor is the His36. The N-linked (GlcNAc...) asparagine glycan is linked to Asn46. 4 disulfides stabilise this stretch: Cys50–Cys108, Cys64–Cys119, Cys82–Cys134, and Cys89–Cys96. Residues 65-69, Lys90, and Arg109 contribute to the substrate site; that span reads KPVNT. Residue Asn112 is glycosylated (N-linked (GlcNAc...) asparagine). His143 serves as the catalytic Proton donor.

This sequence belongs to the pancreatic ribonuclease family. Monomer. Interacts with and forms tight 1:1 complexes with RNH1. Dimerization of two such complexes may occur. Interaction with RNH1 inhibits this protein.

The protein localises to the secreted. The enzyme catalyses an [RNA] containing cytidine + H2O = an [RNA]-3'-cytidine-3'-phosphate + a 5'-hydroxy-ribonucleotide-3'-[RNA].. The catalysed reaction is an [RNA] containing uridine + H2O = an [RNA]-3'-uridine-3'-phosphate + a 5'-hydroxy-ribonucleotide-3'-[RNA].. Its function is as follows. Endonuclease that catalyzes the cleavage of RNA on the 3' side of pyrimidine nucleotides. Acts on single-stranded and double-stranded RNA. In Miopithecus talapoin (Angolan talapoin), this protein is Ribonuclease pancreatic (RNASE1).